Reading from the N-terminus, the 197-residue chain is MKKIAEAWPIVKGDYTVGNPESRIAVVTLASQINSLPEAALWGSSKTENLGVEKIIINTISNSNIRYILICGKESRGHLAGHSLLAIHANGIDEKGRIVGSEGAIPFIENISREAVKRFQQQVVLLDRIGLTNLEEIMKIVREYKDQGEVYPEEPLVAISQKKRQSTFTIPHSGDIIVSEEFVMDSAAGVVCTTNDF.

It belongs to the MtrA family. In terms of assembly, may be part of a complex composed of 3 subunits; MtxA, MtxH and MtxX.

The sequence is that of Putative methyltransferase Mtx subunit A (mtxA) from Methanosarcina barkeri (strain Fusaro / DSM 804).